A 90-amino-acid polypeptide reads, in one-letter code: Protein RL8A (90 aa).

A helical transmembrane segment spans residues 15 to 34 (WTCEGLLLLLGLLVLFFHHH). The interval 55 to 90 (HESGWYSSDDDGDRDGDEETGESHNRNSVGLSAVFS) is disordered. The segment covering 62–74 (SDDDGDRDGDEET) has biased composition (acidic residues). Residues 80 to 90 (RNSVGLSAVFS) show a composition bias toward polar residues.

It is found in the host membrane. This chain is Protein RL8A (RL8A), found in Homo sapiens (Human).